The sequence spans 216 residues: Kynurenine formamidase (216 aa).

Trp25 provides a ligand contact to substrate. His55, His59, and Asp61 together coordinate Zn(2+). The active-site Proton donor/acceptor is the His65. Zn(2+) is bound by residues His167 and Glu179.

It belongs to the Cyclase 1 superfamily. KynB family. As to quaternary structure, homodimer. Requires Zn(2+) as cofactor.

The catalysed reaction is N-formyl-L-kynurenine + H2O = L-kynurenine + formate + H(+). It functions in the pathway amino-acid degradation; L-tryptophan degradation via kynurenine pathway; L-kynurenine from L-tryptophan: step 2/2. In terms of biological role, catalyzes the hydrolysis of N-formyl-L-kynurenine to L-kynurenine, the second step in the kynurenine pathway of tryptophan degradation. This Cupriavidus taiwanensis (strain DSM 17343 / BCRC 17206 / CCUG 44338 / CIP 107171 / LMG 19424 / R1) (Ralstonia taiwanensis (strain LMG 19424)) protein is Kynurenine formamidase.